Reading from the N-terminus, the 254-residue chain is Adenosylcobinamide-GDP ribazoletransferase (254 aa).

A run of 7 helical transmembrane segments spans residues 29-49, 50-70, 98-118, 121-141, 170-190, 198-218, and 230-250; these read LFWF…LGYF, TSLL…GIAL, IMKD…MMLL, IAIL…GVLL, AGVV…FPLL, LYAV…TGLL, and VLGA…ALSA.

It belongs to the CobS family. Mg(2+) serves as cofactor.

Its subcellular location is the cell inner membrane. It catalyses the reaction alpha-ribazole + adenosylcob(III)inamide-GDP = adenosylcob(III)alamin + GMP + H(+). The catalysed reaction is alpha-ribazole 5'-phosphate + adenosylcob(III)inamide-GDP = adenosylcob(III)alamin 5'-phosphate + GMP + H(+). Its pathway is cofactor biosynthesis; adenosylcobalamin biosynthesis; adenosylcobalamin from cob(II)yrinate a,c-diamide: step 7/7. In terms of biological role, joins adenosylcobinamide-GDP and alpha-ribazole to generate adenosylcobalamin (Ado-cobalamin). Also synthesizes adenosylcobalamin 5'-phosphate from adenosylcobinamide-GDP and alpha-ribazole 5'-phosphate. The protein is Adenosylcobinamide-GDP ribazoletransferase of Pelodictyon phaeoclathratiforme (strain DSM 5477 / BU-1).